Reading from the N-terminus, the 217-residue chain is MTPRSLVRIVGVVVATTLALVSAPAGGRAAHADPCSDIAVVFARGTHQASGLGDVGEAFVDSLTSQVGGRSIGVYAVNYPASDDYRASASNGSDDASAHIQRTVASCPNTRIVLGGYSQGATVIDLSTSAMPPAVADHVAAVALFGEPSSGFSSMLWGGGSLPTIGPLYSSKTINLCAPDDPICTGGGNIMAHVSYVQSGMTSQAATFAANRLDHAG.

The N-terminal stretch at 1–32 (MTPRSLVRIVGVVVATTLALVSAPAGGRAAHA) is a signal peptide. Cys35 and Cys107 are disulfide-bonded. Residue Ser118 is the Nucleophile of the active site. A disulfide bridge connects residues Cys177 and Cys184. Asp181 is an active-site residue. The Proton donor/acceptor role is filled by His193.

The protein belongs to the cutinase family.

Its subcellular location is the secreted. It catalyses the reaction a fatty acid ester + H2O = an aliphatic alcohol + a fatty acid + H(+). Shows esterase activity, with a preference for short- and medium-chain fatty acids. The protein is Carboxylesterase Culp1 of Mycobacterium bovis (strain ATCC BAA-935 / AF2122/97).